The sequence spans 307 residues: Small ribosomal subunit protein uS2 (307 aa).

The disordered stretch occupies residues 256–307 (GGEAEQAAVDATGGAATEETPAAESTGAASEAAAVSEAAEPATEQPAADAEA). Over residues 259–307 (AEQAAVDATGGAATEETPAAESTGAASEAAAVSEAAEPATEQPAADAEA) the composition is skewed to low complexity.

This sequence belongs to the universal ribosomal protein uS2 family.

The protein is Small ribosomal subunit protein uS2 of Nocardioides sp. (strain ATCC BAA-499 / JS614).